Reading from the N-terminus, the 260-residue chain is Type III pantothenate kinase (260 aa).

6 to 13 (DSGNTNIV) is a binding site for ATP. 108–111 (GADR) is a substrate binding site. The Proton acceptor role is filled by aspartate 110. K(+) is bound at residue aspartate 130. Threonine 133 is a binding site for ATP. A substrate-binding site is contributed by threonine 185.

This sequence belongs to the type III pantothenate kinase family. Homodimer. The cofactor is NH4(+). It depends on K(+) as a cofactor.

It localises to the cytoplasm. The enzyme catalyses (R)-pantothenate + ATP = (R)-4'-phosphopantothenate + ADP + H(+). It functions in the pathway cofactor biosynthesis; coenzyme A biosynthesis; CoA from (R)-pantothenate: step 1/5. In terms of biological role, catalyzes the phosphorylation of pantothenate (Pan), the first step in CoA biosynthesis. This is Type III pantothenate kinase from Paramagnetospirillum magneticum (strain ATCC 700264 / AMB-1) (Magnetospirillum magneticum).